The primary structure comprises 514 residues: MSISSDEVNFLVYRYLQESGFSHSAFTFGIESHISQSNINGALVPPAALISIIQKGLQYVEAEVSINEDGTLFDGRPIESLSLIDAVMPDVVQTRQQAYRDKLAQQHAAAAAAAAAATNQQGSAKNGENTANGEENGAHTIANNHTDMMEVDGDVEIPSNKAVVLRGHESEVFICAWNPVSDLLASGSGDSTARIWNLSENSTSGPTQLVLRHCIREGGQDVPSNKDVTSLDWNSEGTLLATGSYDGFARIWTKDGNLASTLGQHKGPIFALKWNKKGNFILSAGVDKTTIIWDAHTGEAKQQFPFHSAPALDVDWQSNNTFASCSTDMCIHVCKLGQDRPIKTFQGHTNEVNAIKWDPTGNLLASCSDDMTLKIWSMKQDNCVHDLQAHNKEIYTIKWSPTGPGTNNPNANLMLASASFDSTVRLWDVDRGICIHTLTKHQEPVYSVAFSPDGRYLASGSFDKCVHIWNTQTGALVHSYRGTGGIFEVCWNAAGDKVGASASDGSVCVLDLRK.

N-acetylserine is present on Ser2. The LisH domain maps to 4–36 (SSDEVNFLVYRYLQESGFSHSAFTFGIESHISQ). The 46-residue stretch at 41–86 (GALVPPAALISIIQKGLQYVEAEVSINEDGTLFDGRPIESLSLIDA) folds into the F-box-like domain. Lys102 carries the post-translational modification N6-acetyllysine. Residues 114 to 139 (AAAATNQQGSAKNGENTANGEENGAH) form a disordered region. The span at 124-135 (AKNGENTANGEE) shows a compositional bias: low complexity. 8 WD repeats span residues 167–206 (GHES…TSGP), 223–262 (PSNK…ASTL), 264–303 (QHKG…AKQQ), 306–344 (FHSA…PIKT), 347–386 (GHTN…CVHD), 389–437 (AHNK…CIHT), 440–479 (KHQE…LVHS), and 481–513 (RGTG…LDLR). A Glycyl lysine isopeptide (Lys-Gly) (interchain with G-Cter in SUMO2) cross-link involves residue Lys277.

This sequence belongs to the WD repeat EBI family. In terms of assembly, component of the N-Cor repressor complex, at least composed of NCOR1, NCOR2, HDAC3, TBL1X, TBL1XR1, CORO2A and GPS2. Probable component of some E3 ubiquitin ligase complex. Interacts with histones H2B and H4. Interacts with MECP2; bridges interaction between MECP2 and NCOR1. Interacts with USP44.

It is found in the nucleus. In terms of biological role, F-box-like protein involved in the recruitment of the ubiquitin/19S proteasome complex to nuclear receptor-regulated transcription units. Plays an essential role in transcription activation mediated by nuclear receptors. Probably acts as integral component of the N-Cor corepressor complex that mediates the recruitment of the 19S proteasome complex, leading to the subsequent proteasomal degradation of N-Cor complex, thereby allowing cofactor exchange, and transcription activation. The sequence is that of F-box-like/WD repeat-containing protein TBL1XR1 (Tbl1xr1) from Mus musculus (Mouse).